The primary structure comprises 614 residues: UvrABC system protein C (614 aa).

Residues 12–91 (ESPGVYLMKG…IKKHRPRYNL (80 aa)) form the GIY-YIG domain. Residues 201–236 (RDLLKTYRERMASAAANERYEEAARYRDLIRAIEVT) form the UVR domain.

The protein belongs to the UvrC family. Interacts with UvrB in an incision complex.

The protein resides in the cytoplasm. The UvrABC repair system catalyzes the recognition and processing of DNA lesions. UvrC both incises the 5' and 3' sides of the lesion. The N-terminal half is responsible for the 3' incision and the C-terminal half is responsible for the 5' incision. The chain is UvrABC system protein C from Geobacter metallireducens (strain ATCC 53774 / DSM 7210 / GS-15).